Reading from the N-terminus, the 768-residue chain is Vitamin B12-dependent ribonucleoside-diphosphate reductase (768 aa).

In terms of domain architecture, ATP-cone spans 3 to 97; the sequence is KEVVKRDGTV…LYREKRRAIR (95 aa). Substrate contacts are provided by residues serine 234, 249 to 250, glycine 278, 432 to 436, and 579 to 583; these read AC, NPCGE, and PTGTI. Cysteine 250 and cysteine 445 are joined by a disulfide. Asparagine 432 acts as the Proton acceptor in catalysis. Residue cysteine 434 is the Cysteine radical intermediate of the active site. Glutamate 436 acts as the Proton acceptor in catalysis.

It belongs to the ribonucleoside diphosphate reductase class-2 family. As to quaternary structure, monomer. The cofactor is adenosylcob(III)alamin.

It catalyses the reaction a 2'-deoxyribonucleoside 5'-diphosphate + [thioredoxin]-disulfide + H2O = a ribonucleoside 5'-diphosphate + [thioredoxin]-dithiol. Functionally, provides the precursors necessary for DNA synthesis. Catalyzes the biosynthesis of deoxyribonucleotides from the corresponding ribonucleotides. In Thermoplasma acidophilum (strain ATCC 25905 / DSM 1728 / JCM 9062 / NBRC 15155 / AMRC-C165), this protein is Vitamin B12-dependent ribonucleoside-diphosphate reductase.